The chain runs to 236 residues: Ribose-5-phosphate isomerase A (236 aa).

Substrate contacts are provided by residues threonine 32–threonine 35, aspartate 87–aspartate 90, and lysine 100–glycine 103. The active-site Proton acceptor is glutamate 109. Lysine 127 lines the substrate pocket.

The protein belongs to the ribose 5-phosphate isomerase family. In terms of assembly, homodimer.

The catalysed reaction is aldehydo-D-ribose 5-phosphate = D-ribulose 5-phosphate. Its pathway is carbohydrate degradation; pentose phosphate pathway; D-ribose 5-phosphate from D-ribulose 5-phosphate (non-oxidative stage): step 1/1. Catalyzes the reversible conversion of ribose-5-phosphate to ribulose 5-phosphate. The chain is Ribose-5-phosphate isomerase A from Haloquadratum walsbyi (strain DSM 16790 / HBSQ001).